A 357-amino-acid chain; its full sequence is Ferrochelatase (357 aa).

Fe cation contacts are provided by His193 and Glu272.

This sequence belongs to the ferrochelatase family.

The protein resides in the cytoplasm. The enzyme catalyses heme b + 2 H(+) = protoporphyrin IX + Fe(2+). The protein operates within porphyrin-containing compound metabolism; protoheme biosynthesis; protoheme from protoporphyrin-IX: step 1/1. Its function is as follows. Catalyzes the ferrous insertion into protoporphyrin IX. This is Ferrochelatase from Hyphomonas neptunium (strain ATCC 15444).